Reading from the N-terminus, the 847-residue chain is Glycogen phosphorylase, liver form (847 aa).

Position 2 is an N-acetylalanine (Ala2). Ser15 bears the Phosphoserine; by PHK; in form phosphorylase a mark. Residues 43 to 45, Tyr76, and Arg310 each bind AMP; that span reads DRN. At Lys364 the chain carries N6-succinyllysine. Lys470 is modified (N6-acetyllysine). Phosphoserine occurs at positions 524, 561, and 639. Lys681 is subject to N6-(pyridoxal phosphate)lysine. Lys796 carries the N6-acetyllysine modification.

It belongs to the glycogen phosphorylase family. As to quaternary structure, homodimer; enzymatically active. Interacts with PPP1R3B; recruits the phosphatase PP1 which dephosphorylates and inactivates PYGL/glycogen phosphorylase. The cofactor is pyridoxal 5'-phosphate. Acetylation, which is up-regulated by glucose and insulin and down-regulated by glucagon, inhibits the glycogen phosphorylase activity by promoting PPP1R3B-mediated recruitment of phosphatase PP1 and Ser-15 dephosphorylation. In terms of processing, phosphorylation at Ser-15 converts inactive phosphorylase b into active phosphorylase a. Dephosphorylation of Ser-15 by phosphatase PP1 inactivates the enzyme.

It is found in the cytoplasm. It localises to the cytosol. It carries out the reaction [(1-&gt;4)-alpha-D-glucosyl](n) + phosphate = [(1-&gt;4)-alpha-D-glucosyl](n-1) + alpha-D-glucose 1-phosphate. With respect to regulation, allosterically regulated through the non-covalent binding of metabolites, being activated by AMP and inhibited by ATP, ADP, and glucose-6-phosphate. The activity is also controlled by post-translational modifications including phosphorylation and acetylation. In terms of biological role, allosteric enzyme that catalyzes the rate-limiting step in glycogen catabolism, the phosphorolytic cleavage of glycogen to produce glucose-1-phosphate, and plays a central role in maintaining cellular and organismal glucose homeostasis. The polypeptide is Glycogen phosphorylase, liver form (Homo sapiens (Human)).